A 208-amino-acid polypeptide reads, in one-letter code: NAD(P)H dehydrogenase (quinone) (208 aa).

Positions 4–192 (VLVLYYSSYG…DGARFQGRHV (189 aa)) constitute a Flavodoxin-like domain. FMN contacts are provided by residues 10–15 (SSYGHV) and 78–80 (TRF). Tyr-12 is a binding site for NAD(+). Trp-98 is a substrate binding site. Residues 113 to 119 (STGSQHG) and His-134 each bind FMN. The interval 161-183 (YGASTLADDGDGGDRQPSANELD) is disordered.

Belongs to the WrbA family. The cofactor is FMN.

It carries out the reaction a quinone + NADH + H(+) = a quinol + NAD(+). It catalyses the reaction a quinone + NADPH + H(+) = a quinol + NADP(+). In Paracoccus denitrificans (strain Pd 1222), this protein is NAD(P)H dehydrogenase (quinone).